The primary structure comprises 239 residues: Gamma-lactamase MBL2 (239 aa).

Zn(2+)-binding residues include H56, H58, D60, H61, H141, and D165.

Belongs to the metallo-beta-lactamase superfamily.

In terms of biological role, gamma-lactamase; part of the Fusarium detoxification of benzoxazolinone cluster 2 (FDB2) involved in the degradation of benzoxazolinones produced by the host plant. Maize, wheat, and rye produce the 2 benzoxazinone phytoanticipins 2,4-dihy-droxy-7-methoxy-1,4-benzoxazin-3-one (DIMBOA) and 2,4-dihydroxy-1,4-benzoxazin-3-one (DIBOA) that, due to their inherent instability once released, spontaneously degrade to the more stable corresponding benzoxazolinones, 6-methoxy-2-benzoxazolinone (MBOA) and 2-benzoxazolinone (BOA), respectively. The first step in the detoxification of benzoxazolinones involves the hydrolysis of the cyclic ester bond of benzoxazolinones by the FDB1 cluster gamma-lactamase MBL1 to aminophenols. MBL1 is able to convert BOA into 2-aminophenol (2-AP), as well as MBOA into 5-methoxy-2-aminophenol (2-AMP). The FDB2 cluster N-malonyltransferase FDB2/NAT1 then metabolizes aminophenols via N-malonylation to non-toxic malonamic acids. FDB2/NAT1 converts 2-AP into N-(2-hydroxyphenyl) malonamic acid (HPMA) and 2-AMP into N-(2-hydroxy-4-methoxyphenyl) malonamic acid (HMPMA). The duplicated dienlactone hydrolases DLH1 and DLH2 may provide redundant function for hydrolyzing the lactone moiety in the BOA molecule. The roles of the amidases and other enzymes encoded by the 2 FDB clusters have not been identified so far. In Gibberella moniliformis (strain M3125 / FGSC 7600) (Maize ear and stalk rot fungus), this protein is Gamma-lactamase MBL2.